The following is a 59-amino-acid chain: Large ribosomal subunit protein uL30 (59 aa).

It belongs to the universal ribosomal protein uL30 family. As to quaternary structure, part of the 50S ribosomal subunit.

This chain is Large ribosomal subunit protein uL30, found in Hydrogenobaculum sp. (strain Y04AAS1).